The chain runs to 396 residues: 1-deoxy-D-xylulose 5-phosphate reductoisomerase (396 aa).

T10, G11, S12, I13, and N123 together coordinate NADPH. Residue K124 coordinates 1-deoxy-D-xylulose 5-phosphate. An NADPH-binding site is contributed by E125. D149 lines the Mn(2+) pocket. S150, E151, S185, and H208 together coordinate 1-deoxy-D-xylulose 5-phosphate. E151 is a binding site for Mn(2+). G214 is a binding site for NADPH. Residues S221, N226, K227, and E230 each contribute to the 1-deoxy-D-xylulose 5-phosphate site. E230 serves as a coordination point for Mn(2+).

This sequence belongs to the DXR family. The cofactor is Mg(2+). Mn(2+) serves as cofactor.

The catalysed reaction is 2-C-methyl-D-erythritol 4-phosphate + NADP(+) = 1-deoxy-D-xylulose 5-phosphate + NADPH + H(+). The protein operates within isoprenoid biosynthesis; isopentenyl diphosphate biosynthesis via DXP pathway; isopentenyl diphosphate from 1-deoxy-D-xylulose 5-phosphate: step 1/6. Its function is as follows. Catalyzes the NADPH-dependent rearrangement and reduction of 1-deoxy-D-xylulose-5-phosphate (DXP) to 2-C-methyl-D-erythritol 4-phosphate (MEP). In Shewanella sp. (strain MR-7), this protein is 1-deoxy-D-xylulose 5-phosphate reductoisomerase.